Here is a 567-residue protein sequence, read N- to C-terminus: Hexose transporter HXT15 (567 aa).

Polar residues predominate over residues 1 to 19 (MASEQSSPEINADNLNSSA). The tract at residues 1-32 (MASEQSSPEINADNLNSSAADVHVQPPGEKEW) is disordered. Over 1–55 (MASEQSSPEINADNLNSSAADVHVQPPGEKEWSDGFYDKEVINGNTPDAPKRGFL) the chain is Cytoplasmic. The chain crosses the membrane as a helical span at residues 56 to 76 (GYLIIYLLCYPVSFGGFLPGW). Over 77 to 112 (DSGITAGFINMDNFKMNFGSYKHSTGEYYLSNVRMG) the chain is Extracellular. Residues 113 to 133 (LLVAMFSVGCSIGGVAFARLA) form a helical membrane-spanning segment. Topologically, residues 134–139 (DTLGRR) are cytoplasmic. Residues 140–160 (LAIVIVVLVYMVGAIIQISSN) traverse the membrane as a helical segment. Over 161–170 (HKWYQYFVGK) the chain is Extracellular. A helical transmembrane segment spans residues 171-191 (IIYGLGAGGCSVLCPMLLSEI). Topologically, residues 192–197 (APTDLR) are cytoplasmic. Residues 198–218 (GGLVSLYQLNMTFGIFLGYCS) traverse the membrane as a helical segment. Residues 219-232 (VYGTRKYSNTAQWR) lie on the Extracellular side of the membrane. The chain crosses the membrane as a helical span at residues 233–253 (IPVGLCFLWALIIIVGMLLVP). Topologically, residues 254-336 (ESPRYLIECE…VQTFLQLTGE (83 aa)) are cytoplasmic. A helical transmembrane segment spans residues 337–353 (NYFFFYGTTIFKSVGLT). Residues 354-359 (DGFETS) are Extracellular-facing. A helical transmembrane segment spans residues 360-377 (IVLGTVNFFSTIIAVMVV). The Cytoplasmic portion of the chain corresponds to 378-384 (DKIGRRK). Residues 385 to 405 (CLLFGAASMMACMVIFASIGV) form a helical membrane-spanning segment. Topologically, residues 406-427 (KCLYPHGQDGPSSKGAGNAMIV) are extracellular. A helical transmembrane segment spans residues 428–448 (FTCFYIFCFATTWAPVAYIVV). Residues 449–465 (AESFPSKVKSKAMSIST) lie on the Cytoplasmic side of the membrane. Residues 466–486 (AFNWLWQFLIGFFTPFITGSI) traverse the membrane as a helical segment. Residue H487 is a topological domain, extracellular. A helical transmembrane segment spans residues 488 to 508 (FYYGYVFVGCLVAMFLYVFFF). Residues 509 to 567 (LPETIGLSLEEIQLLYEEGIKPWKSASWVPPSRRGASSRETEAKKKSWKEVLKFPKSFN) are Cytoplasmic-facing. Positions 533–555 (SASWVPPSRRGASSRETEAKKKS) are disordered. Basic and acidic residues predominate over residues 545–555 (SSRETEAKKKS).

Belongs to the major facilitator superfamily. Sugar transporter (TC 2.A.1.1) family.

The protein localises to the membrane. Functionally, probable glucose transporter. The polypeptide is Hexose transporter HXT15 (HXT15) (Saccharomyces cerevisiae (strain ATCC 204508 / S288c) (Baker's yeast)).